Reading from the N-terminus, the 123-residue chain is Large ribosomal subunit protein uL29y (123 aa).

Belongs to the universal ribosomal protein uL29 family.

The protein is Large ribosomal subunit protein uL29y (RPL35B) of Arabidopsis thaliana (Mouse-ear cress).